The sequence spans 716 residues: DNA ligase (716 aa).

Residues 50-54 (DAEYD), 99-100 (SL), and E132 contribute to the NAD(+) site. K134 acts as the N6-AMP-lysine intermediate in catalysis. R155, E192, K308, and K332 together coordinate NAD(+). The Zn(2+) site is built by C437, C439, C461, and C467. Positions 638–716 (KSNSAVAGKT…EDEWLKLIGE (79 aa)) constitute a BRCT domain.

Belongs to the NAD-dependent DNA ligase family. LigA subfamily. Mg(2+) serves as cofactor. Mn(2+) is required as a cofactor.

The enzyme catalyses NAD(+) + (deoxyribonucleotide)n-3'-hydroxyl + 5'-phospho-(deoxyribonucleotide)m = (deoxyribonucleotide)n+m + AMP + beta-nicotinamide D-nucleotide.. Its function is as follows. DNA ligase that catalyzes the formation of phosphodiester linkages between 5'-phosphoryl and 3'-hydroxyl groups in double-stranded DNA using NAD as a coenzyme and as the energy source for the reaction. It is essential for DNA replication and repair of damaged DNA. The chain is DNA ligase from Bradyrhizobium diazoefficiens (strain JCM 10833 / BCRC 13528 / IAM 13628 / NBRC 14792 / USDA 110).